Reading from the N-terminus, the 361-residue chain is uncharacterized protein (361 aa).

WD repeat units follow at residues 57–96, 103–142, 146–184, 187–229, 237–275, and 280–318; these read RHKKSCRNISVNESGTEFISVGSDGVLKIADTSTGRVSSK, KEISPYSVVQWIENDMVFATGDDNGCVSVWDKRTEGGIIH, DHIDYISSISPFEERYFVATSGDGVLSVIDARNFKKPIL, EQDE…DHTD, SHDFSIETITRADSDSLYVGGSDGCIRLLHILPNKYERI, and SSRSTVDAVDVTTEGNFLVSCSGTELAFWPVDQKEGDES. Residues 311–361 form a disordered region; the sequence is DQKEGDESSSSDNLDSDEDSSSDSEFSSPKKKKKVGNQGKKPLGTDFFDGL.

The protein localises to the nucleus. The protein resides in the nucleolus. This is an uncharacterized protein from Schizosaccharomyces pombe (strain 972 / ATCC 24843) (Fission yeast).